Reading from the N-terminus, the 261-residue chain is DNA oxidative demethylase ALKBH2 (261 aa).

A disordered region spans residues 1 to 57 (MDRFLVKGAQGGLLRKQEEQEPTGEEPAVLGGDKESTRKRPRREAPGNGGHSAGPSW). The PCNA-binding motif lies at 3 to 7 (RFLVK). Substrate contacts are provided by residues 102–104 (FGK) and 122–124 (YTF). The 106-residue stretch at 152-257 (TFNFVLINRY…RVNLTFRKIL (106 aa)) folds into the Fe2OG dioxygenase domain. Asn159, Tyr161, and His171 together coordinate 2-oxoglutarate. Fe cation is bound by residues His171 and Asp173. Asp174 lines the substrate pocket. His236, Arg248, Thr252, and Arg254 together coordinate 2-oxoglutarate. His236 lines the Fe cation pocket.

This sequence belongs to the alkB family. As to quaternary structure, interacts with PCNA homotrimer; this interaction is enhanced during the S-phase of the cell cycle. Interacts with nucleolar proteins NCL, UBTF and NPM1. Interacts with XRCC5-XRCC6 heterodimer. It depends on Fe(2+) as a cofactor. Detected in colon, small intestine, ovary, testis, prostate, skeletal muscle, heart, liver and urinary bladder.

The protein localises to the nucleus. It localises to the nucleolus. It is found in the nucleoplasm. The enzyme catalyses a methylated nucleobase within DNA + 2-oxoglutarate + O2 = a nucleobase within DNA + formaldehyde + succinate + CO2. It carries out the reaction an N(1)-methyl-2'-deoxyadenosine in double-stranded DNA + 2-oxoglutarate + O2 = a 2'-deoxyadenosine in double-stranded DNA + formaldehyde + succinate + CO2 + H(+). It catalyses the reaction an N(1)-methyl-2'-deoxyadenosine in single-stranded DNA + 2-oxoglutarate + O2 = a 2'-deoxyadenosine in single-stranded DNA + formaldehyde + succinate + CO2 + H(+). The catalysed reaction is an N(3)-methyl-2'-deoxycytidine in double-stranded DNA + 2-oxoglutarate + O2 = a 2'-deoxycytidine in double-stranded DNA + formaldehyde + succinate + CO2 + H(+). The enzyme catalyses an N(3)-methyl-2'-deoxycytidine in single-stranded DNA + 2-oxoglutarate + O2 = a 2'-deoxycytidine in single-stranded DNA + formaldehyde + succinate + CO2 + H(+). It carries out the reaction a 1,N(6)-etheno-2'-deoxyadenosine in double-stranded DNA + 2-oxoglutarate + O2 + H2O = a 2'-deoxyadenosine in double-stranded DNA + glyoxal + succinate + CO2. It catalyses the reaction a 1,N(6)-etheno-2'-deoxyadenosine in single-stranded DNA + 2-oxoglutarate + O2 + H2O = a 2'-deoxyadenosine in single-stranded DNA + glyoxal + succinate + CO2. The catalysed reaction is a 3,N(4)-etheno-2'-deoxycytidine in double-stranded DNA + 2-oxoglutarate + O2 + H2O = a 2'-deoxycytidine in double-stranded DNA + glyoxal + succinate + CO2. The enzyme catalyses a 3,N(4)-etheno-2'-deoxycytidine in single-stranded DNA + 2-oxoglutarate + O2 + H2O = a 2'-deoxycytidine in single-stranded DNA + glyoxal + succinate + CO2. It carries out the reaction a 1,N(2)-etheno-2'-deoxyguanosine in double-stranded DNA + 2-oxoglutarate + O2 + H2O = a 2'-deoxyguanosine in double-stranded DNA + glyoxal + succinate + CO2. Its activity is regulated as follows. Activated by ascorbate and magnesium ions. In terms of biological role, dioxygenase that repairs alkylated nucleic acid bases by direct reversal oxidative dealkylation. Can process both double-stranded (ds) and single-stranded (ss) DNA substrates, with a strong preference for dsDNA. Uses molecular oxygen, 2-oxoglutarate and iron as cofactors to oxidize the alkyl groups that are subsequently released as aldehydes, regenerating the undamaged bases. Probes the base pair stability, locates a weakened base pair and flips the damaged base to accommodate the lesion in its active site for efficient catalysis. Repairs monoalkylated bases, specifically N1-methyladenine and N3-methylcytosine, as well as higher order alkyl adducts such as bases modified with exocyclic bridged adducts known as etheno adducts including 1,N6-ethenoadenine, 3,N4-ethenocytosine and 1,N2-ethenoguanine. Acts as a gatekeeper of genomic integrity under alkylation stress. Efficiently repairs alkylated lesions in ribosomal DNA (rDNA). These lesions can cause ss- and dsDNA strand breaks that severely impair rDNA transcription. In a response mechanism to DNA damage, associates with PCNA at replication forks to repair alkylated adducts prior to replication. This is DNA oxidative demethylase ALKBH2 (ALKBH2) from Homo sapiens (Human).